Reading from the N-terminus, the 121-residue chain is Small ribosomal subunit protein uS13 (121 aa).

Positions 93 to 121 (KGLPLRGQKTKTNARTRKGPKKTIANKKK) are disordered.

Belongs to the universal ribosomal protein uS13 family. Part of the 30S ribosomal subunit. Forms a loose heterodimer with protein S19. Forms two bridges to the 50S subunit in the 70S ribosome.

In terms of biological role, located at the top of the head of the 30S subunit, it contacts several helices of the 16S rRNA. In the 70S ribosome it contacts the 23S rRNA (bridge B1a) and protein L5 of the 50S subunit (bridge B1b), connecting the 2 subunits; these bridges are implicated in subunit movement. Contacts the tRNAs in the A and P-sites. The chain is Small ribosomal subunit protein uS13 from Clostridium perfringens (strain ATCC 13124 / DSM 756 / JCM 1290 / NCIMB 6125 / NCTC 8237 / Type A).